Reading from the N-terminus, the 54-residue chain is U1-ctenitoxin-Pr1a (54 aa).

5 disulfides stabilise this stretch: Cys-2–Cys-19, Cys-9–Cys-25, Cys-16–Cys-51, Cys-18–Cys-39, and Cys-27–Cys-37.

As to expression, expressed by the venom gland.

It is found in the secreted. Functionally, omega-agatoxins are antagonists of voltage-gated calcium channels (Cav). Causes rapid general flaccid paralysis followed by death in 10-30 minutes when injected in mice at dose levels of 5 ug per mouse. The polypeptide is U1-ctenitoxin-Pr1a (Phoneutria reidyi (Brazilian Amazonian armed spider)).